A 2367-amino-acid polypeptide reads, in one-letter code: MGTRGAVMPPPMWGLLGCCFVCAWALGGPRPIRSLPPLSSQVKPGSVPMQVPLEGAEAALAYLYSGDAQQLSQVNCSERYEARGAGAMPGLPPSLQGAAGTLAQAANFLNMLLQANDIRESSVEEDVEWYQALVRSVAEGDPRVYRALLTFNPPPGASHLQLALQATRTGEETILQDLSGNWVQEENPPGDLDTPALKKRVLTNDLGSLGSPKWPQADGYVGDTQQVRLSPPFLECQEGRLRPGWLITLSATFYGLKPDLSPEVRGQVQMDVDLQSVDINQCASGPGWYSNTHLCDLNSTQCVPLESQGFVLGRYLCRCRPGFYGASPSGGLEESDFQTTGQFGFPEGRSGRLLQCLPCPEGCTSCMDATPCLVEEAAVLRAAVLACQACCMLAIFLSMLVSYRCRRNKRIWASGVVLLETVLFGFLLLYFPVFILYFKPSVFRCIALRWVRLLGFAIVYGTIILKLYRVLQLFLSRTAQRSALLSSGRLLRRLGLLLLPVLGFLAVWTVGALERGIQHAPLVIRGHTPSGRHFYLCHHDRWDYIMVVAELLLLCWGSFLCYATRAVLSAFHEPRYMGIALHNELLLSAAFHTARFVLVPSLHPDWTLLLFFFHTHSTVTTTLALIFIPKFWKLGAPPREEMVDEVCEDELDLQHSGSYLGSSIASAWSEHSLDPGDIRDELKKLYAQLEVHKTKEMAANNPHLPKKRGSSCQGLGRSFMRYLAEFPEALARQHSRDSGSPGHGSLPGSSRRRLLSSSLQEPEGTPALHKSRSTYDQRREQDPPLLDSLLRRKLAKKASRTESRESVEGPPALGFRSASAHNLTVGERLPRARPASLQKSLSVASSREKALLMASQAYLEETYRQAKEREERKKAKAAMASLVRRPSARRLERPRGAPLSAPPSPAKSSSVDSSHTSGRLHEEARRRLPHPPIRHQVSTPILALSGGLGEPRMLSPTSTLAPALLPALAPTPAPALAPVPVSPQSPNLLTYICPWENAELPAKQENVPQEGPSGPERGHHSPAPARARLWRALSVAVEKSRAGENEMDAEDAHHQREANDVDEDRPKIFPKSHSLKAPVQQGSMRSLGLAIKALTRSRSTYREKESVEESPEGQNSGTAGESMGAPSRSPRLGRPKAVSKQAALIPSDDKESLQNQQNAHTSRMLQVCQREGSREQEDRGRRMTQGLGERKAERAGKTGLAMLRQVSRDKNIKQSKETPVGWQELPKAGLQSLGSADHRVAEVCPWEVTESETRQPDSGNKAEICPWETSEGAPESRALRQDPGDSQKKRGEARGKSEPIDVVPMMRKKPERLVREQEAVCPWESADRGGLSPGSAPQDPGRIRDKSEAGDSVEARKVEKPGWEAAGPEAHTPDITKAEPCPWEASEGGEDGKPAQEAVKDLPQEKQKTRKATFWKEQKPGGDLESLCPWESTDFRGPSAVSIQAPGSSECSGSLGSGIAEVCLWEAGDAPAIQKAEICPWELDDNVMGQEMLSLGTGRESLQEKEKASRKGSFGEMGEQTVKAVQKLSQQQESVCPRESTVPGHSSPCLDNSSSKAGSQFLCNGGSRATQVCPQEDLRPEAQEATPAKTEICPWEVNERTREEWTSAQVPRGGESQKDKEKMPGKSEIEDVTAWEKPEGQIQKQEAVGPWESVDPGSFSPQPRPQDTERPQTLLQMSGSVGSKAADICPLDVEENLTAGKAEICPWEVGAGAGEERALGAEAIRKSPNDTGKVSADLGPRERAVTAPEKPQKPTPEWEVACPWGSVGPGACSQHPGTLDADGPKAGFQELDHMGCRPGEVCPWEAQEAATSEKAKICPWEVSEGTTGKGLDQKAGSESAEQREKALEKGRLTSLGEDVSKGMAKLCQQQETICIWENKDLRESPAQAPKISDLPSSMSSEVAEGHSLEATEKGDLRQDPKTGSFPEHITQEKAPAADTEEFTTEDGEKTSHELQSVCPWETTAPADSVSHLDRQRPDQPKASSQRLVSTGGRAADVCPWDVPDAGVYKSDSSAKAETCPWEVTERIPVKGVSRQDGKGDSQEEKGRAPEKSEPKGVPVQKKPEMADFRQQEAVCPWESQDGKGLSPQPAPDASDRSRGSSEAAGSVETRVAEVCLWEVVEAPSAKKAEICPWEAGGGAAEEGEQERESQGQGEMFLQKAGPGGTEEHFSKAAAKPREQEAVCPGEGTGSGGLLPQSGALDPELKVSPKEAGSMGSRMAELCQWEITDPEGNKIKGTMADICPGEETGVPSEESGLLALTATRREFFPTAPEKPLCLLVHGPLDHFFPESKIPCPKVSRPASTFTLEGVRELQGPSGLEPRTSLAPEPSLQEAESQSSSLTEDSGQVAFEAQYEEFTPPTVYPWDWE.

The first 25 residues, 1–25 (MGTRGAVMPPPMWGLLGCCFVCAWA), serve as a signal peptide directing secretion. Residues 26 to 381 (LGGPRPIRSL…CLVEEAAVLR (356 aa)) lie on the Extracellular side of the membrane. Positions 62-245 (YLYSGDAQQL…CQEGRLRPGW (184 aa)) are cache-like region. N-linked (GlcNAc...) asparagine glycosylation occurs at Asn75. Cys76 and Cys236 form a disulfide bridge. N-linked (GlcNAc...) asparagine glycosylation is present at Asn298. Residues 382–402 (AAVLACQACCMLAIFLSMLVS) form a helical membrane-spanning segment. Over 403 to 415 (YRCRRNKRIWASG) the chain is Cytoplasmic. Residues 416–436 (VVLLETVLFGFLLLYFPVFIL) form a helical membrane-spanning segment. Residues 437–444 (YFKPSVFR) lie on the Extracellular side of the membrane. The helical transmembrane segment at 445–465 (CIALRWVRLLGFAIVYGTIIL) threads the bilayer. A disulfide bridge connects residues Cys445 and Cys537. The Cytoplasmic segment spans residues 466 to 493 (KLYRVLQLFLSRTAQRSALLSSGRLLRR). A helical membrane pass occupies residues 494–514 (LGLLLLPVLGFLAVWTVGALE). Topologically, residues 515 to 543 (RGIQHAPLVIRGHTPSGRHFYLCHHDRWD) are extracellular. The chain crosses the membrane as a helical span at residues 544–564 (YIMVVAELLLLCWGSFLCYAT). Residues 565-575 (RAVLSAFHEPR) lie on the Cytoplasmic side of the membrane. Residues 576–594 (YMGIALHNELLLSAAFHTA) traverse the membrane as a helical segment. Residues 595 to 607 (RFVLVPSLHPDWT) are Extracellular-facing. Residues 608–628 (LLLFFFHTHSTVTTTLALIFI) traverse the membrane as a helical segment. Over 629–2367 (PKFWKLGAPP…PPTVYPWDWE (1739 aa)) the chain is Cytoplasmic. Disordered regions lie at residues 731-818 (ARQH…FRSA), 869-932 (REER…PHPP), 1039-1083 (KSRA…QQGS), 1098-1198 (RSTY…AGKT), 1247-1431 (EVTE…CPWE), 1537-1557 (PRESTVPGHSSPCLDNSSSKA), 1577-1672 (DLRP…ERPQ), 1723-1757 (AIRKSPNDTGKVSADLGPRERAVTAPEKPQKPTPE), 1823-1852 (SEGTTGKGLDQKAGSESAEQREKALEKGRL), 1886-2108 (AQAP…GSVE), 2133-2212 (WEAG…KEAG), and 2308-2367 (GVRE…WDWE). A compositionally biased stretch (low complexity) spans 738–759 (SGSPGHGSLPGSSRRRLLSSSL). Basic and acidic residues predominate over residues 773–782 (STYDQRREQD). The segment covering 1039–1067 (KSRAGENEMDAEDAHHQREANDVDEDRPK) has biased composition (basic and acidic residues). Positions 1153 to 1164 (LQNQQNAHTSRM) are enriched in polar residues. Basic and acidic residues-rich tracts occupy residues 1171–1181 (EGSREQEDRGR), 1277–1299 (RALRQDPGDSQKKRGEARGKSEP), 1341–1362 (GRIRDKSEAGDSVEARKVEKPG), and 1390–1407 (EDGKPAQEAVKDLPQEKQ). The segment covering 1615-1639 (ESQKDKEKMPGKSEIEDVTAWEKPE) has biased composition (basic and acidic residues). 6 stretches are compositionally biased toward basic and acidic residues: residues 1840 to 1851 (AEQREKALEKGR), 1903 to 1920 (AEGHSLEATEKGDLRQDP), 1970 to 1979 (SHLDRQRPDQ), 2023 to 2054 (VTERIPVKGVSRQDGKGDSQEEKGRAPEKSEP), 2061 to 2070 (KKPEMADFRQ), and 2165 to 2180 (TEEHFSKAAAKPREQE). Positions 2326–2340 (PEPSLQEAESQSSSL) are enriched in low complexity.

This sequence belongs to the G-protein coupled receptor 3 family. Homodimer. Associates with the R7 group RGS-GNB5 complexes, composed of an R7 group RGS subunit (RGS6, RGS7, RGS9 or RGS11) and GNB5, promoting their localization to the cell membrane and regulating the GTPase activator activity of R7 RGS proteins. Interacts with TRPM1. Interacts with GRM6. Interacts with EGFLAM; transsynaptic interaction is required for synaptic organization of photoreceptor cells. As to expression, expressed in the retina.

It is found in the cell membrane. The protein localises to the postsynaptic cell membrane. It localises to the cell projection. Its subcellular location is the dendrite. Its function is as follows. Orphan receptor involved in vision. Required for signal transduction through retinal depolarizing bipolar cells. Acts as an atypical G-protein coupled receptor that recruits and regulates the R7 group RGS-GNB5 complexes instead of activating G proteins: promotes the GTPase activator activity of R7 RGS proteins, increasing the GTPase activity of G protein alpha subunits, thereby driving them into their inactive GDP-bound form. Associates with components of metabotropic signaling cascade in retina ON-bipolar neurons, such as TRPM1 and GRM6: may control the ability of the GRM6 cascade to gate TRPM1. The polypeptide is Probable G-protein coupled receptor 179 (Homo sapiens (Human)).